We begin with the raw amino-acid sequence, 501 residues long: Tegument protein US24 (501 aa).

It belongs to the herpesviridae US22 family.

The protein resides in the virion tegument. This chain is Tegument protein US24 (US24), found in Human cytomegalovirus (strain AD169) (HHV-5).